Consider the following 444-residue polypeptide: MKSQSKRTSRLFVFVGVVVAIIIAVLSWRYFGTGSDNNTSGAQQSARGQDTSHGGRRNTPLAPVQAATATEQEVPRYLTGLGTVIAANTVTVTSRVDGELMALHFTEGQQVKAGDLLAEIDPRPYEVQLTQAQGQLAKDQATLDNARRDLARYQKLSKTGLISQQELDTQSSLVRQSEGSVKADQGAIDSAKLQLTYSRITAPISGRVGLKQVDVGNYITSGTATPIVVITQTHPVDVVFTLPESDIPAIIQAQKNAEKTHAIVPVEAWDRTNKQMLAQGYLLSIDNQIDTTTGTIKLKARFNNEDDVLFPNQFVNARIKVDLLQNAVVVPTAAVQMGSEGNFVWTLDDANKVSKHLVTTGIQNSQQVVIDAGLNAGQRVVTDGIDRLTEGVQVEVVTPRSANTDANPASAEKAAAEAEGSTPHQGRGRPANAPARSTTAAEKS.

An N-terminal signal peptide occupies residues 1-20 (MKSQSKRTSRLFVFVGVVVA). The segment covering 37–52 (NNTSGAQQSARGQDTS) has biased composition (polar residues). 2 disordered regions span residues 37-60 (NNTSGAQQSARGQDTSHGGRRNTP) and 398-444 (TPRS…AEKS). Residues 406 to 419 (ANPASAEKAAAEAE) are compositionally biased toward low complexity. Residues 435-444 (ARSTTAAEKS) show a composition bias toward polar residues.

Belongs to the membrane fusion protein (MFP) (TC 8.A.1) family. In terms of assembly, part of a tripartite efflux system composed of MdtA, MdtB and MdtC.

It is found in the cell inner membrane. This is Multidrug resistance protein MdtA from Yersinia pestis bv. Antiqua (strain Antiqua).